A 560-amino-acid chain; its full sequence is Alpha-farnesene synthase (560 aa).

Mg(2+) contacts are provided by Asp308, Asp312, and Glu462. The DDXXD motif signature appears at 308-312 (DDIYD).

Belongs to the terpene synthase family. Tpsa subfamily. Requires Mg(2+) as cofactor. As to expression, expressed in the rind tissues of ripe fruits.

The protein resides in the cytoplasm. It catalyses the reaction (2E,6E)-farnesyl diphosphate = (3E,6E)-alpha-farnesene + diphosphate. Its pathway is secondary metabolite biosynthesis; terpenoid biosynthesis. Functionally, sesquiterpene synthase producing exclusively alpha-farnesene. Associated with the production of sesquiterpenes responsible for the aroma of the fruit. This Cucumis melo (Muskmelon) protein is Alpha-farnesene synthase.